Consider the following 208-residue polypeptide: Small ribosomal subunit protein uS9c (208 aa).

A chloroplast-targeting transit peptide spans 1–51 (MAVSISSLTSSFASLSFTSNLTPKPQTLPMARTKPFSLSNPAVVKPLVITA). Thr-52 carries the N-acetylthreonine modification. The disordered stretch occupies residues 185–208 (DSRIVERKKPGLKKARKAPQFSKR). Positions 194–208 (PGLKKARKAPQFSKR) are enriched in basic residues.

Component of the chloroplast small ribosomal subunit (SSU). Mature 70S chloroplast ribosomes of higher plants consist of a small (30S) and a large (50S) subunit. The 30S small subunit contains 1 molecule of ribosomal RNA (16S rRNA) and 24 different proteins. The 50S large subunit contains 3 rRNA molecules (23S, 5S and 4.5S rRNA) and 33 different proteins. uS9c binds directly to 16S ribosomal RNA. uS9c interacts with translation factor pY (PSRP1).

The protein resides in the plastid. It localises to the chloroplast. Component of the chloroplast ribosome (chloro-ribosome), a dedicated translation machinery responsible for the synthesis of chloroplast genome-encoded proteins, including proteins of the transcription and translation machinery and components of the photosynthetic apparatus. The sequence is that of Small ribosomal subunit protein uS9c (PRPS9) from Spinacia oleracea (Spinach).